Here is a 334-residue protein sequence, read N- to C-terminus: Protein-glutamate methylesterase FrzG (334 aa).

The 188-residue stretch at 147-334 (PYPLVAIAAS…AALMQWVDVC (188 aa)) folds into the CheB-type methylesterase domain. Residues Ser156, His183, and Asp276 contribute to the active site.

The catalysed reaction is [protein]-L-glutamate 5-O-methyl ester + H2O = L-glutamyl-[protein] + methanol + H(+). Its function is as follows. Probable methylesterase. Required for the normal aggregation of M.xanthus cells during fruiting body formation. It is also a component of a sensory transduction pathway that controls the frequency at which cells reverse their gliding direction. It may remove the methyl group from the gamma-glutamyl methyl ester residues in FrzCD. The protein is Protein-glutamate methylesterase FrzG (frzG) of Myxococcus xanthus.